The chain runs to 311 residues: MLSRIVSNNATRSVMCHQAQVGILYKTNPVRTYATLKEVEMRLKSIKNIEKITKTMKIVASTRLSKAEKAKISAKKMDEAEQLFYKNAETKNLDVEATETGAPKELIVAITSDKGLCGSIHSQLAKAVRRHLNDQPNADIVTIGDKIKMQLLRTHPNNIKLSINGIGKDAPTFQESALIADKLLSVMKAGTYPKISIFYNDPVSSLSFEPSEKPIFNAKTIEQSPSFGKFEIDTDANVPRDLFEYTLANQMLTAMAQGYAAEISARRNAMDNASKNAGDMINRYSILYNRTRQAVITNELVDIITGASSLG.

Residues 1 to 33 constitute a mitochondrion transit peptide; sequence MLSRIVSNNATRSVMCHQAQVGILYKTNPVRTY.

It belongs to the ATPase gamma chain family. In terms of assembly, F-type ATPases have 2 components, CF(1) - the catalytic core - and CF(0) - the membrane proton channel. CF(1) has five subunits: alpha(3), beta(3), gamma(1), delta(1), epsilon(1). CF(0) has three main subunits: a, b and c.

Its subcellular location is the mitochondrion. The protein resides in the mitochondrion inner membrane. Mitochondrial membrane ATP synthase (F(1)F(0) ATP synthase or Complex V) produces ATP from ADP in the presence of a proton gradient across the membrane which is generated by electron transport complexes of the respiratory chain. F-type ATPases consist of two structural domains, F(1) - containing the extramembraneous catalytic core, and F(0) - containing the membrane proton channel, linked together by a central stalk and a peripheral stalk. During catalysis, ATP synthesis in the catalytic domain of F(1) is coupled via a rotary mechanism of the central stalk subunits to proton translocation. Part of the complex F(1) domain and the central stalk which is part of the complex rotary element. The gamma subunit protrudes into the catalytic domain formed of alpha(3)beta(3). Rotation of the central stalk against the surrounding alpha(3)beta(3) subunits leads to hydrolysis of ATP in three separate catalytic sites on the beta subunits. The sequence is that of ATP synthase subunit gamma, mitochondrial (ATP3) from Saccharomyces cerevisiae (strain ATCC 204508 / S288c) (Baker's yeast).